Here is a 977-residue protein sequence, read N- to C-terminus: ATP-dependent RNA helicase DBP10 (977 aa).

The tract at residues 1 to 121 is disordered; the sequence is MGIISKRKRH…NSEKSKHKKG (121 aa). The segment covering 26 to 35 has biased composition (polar residues); it reads ITSNIGLNTA. Residues 37–61 are compositionally biased toward acidic residues; sequence SSDESESSGDDEEEVQDIVDFSDEE. The segment covering 70-81 has biased composition (polar residues); sequence SNKTLTDNNSFP. Positions 121–149 match the Q motif motif; that stretch reads GSFPSFGFSKLILSNVHKKGFRQPTPIQR. The region spanning 152 to 324 is the Helicase ATP-binding domain; it reads IPLILQKRDI…KAGLTNPVLV (173 aa). Position 165 to 172 (165 to 172) interacts with ATP; the sequence is ARTGSGKT. The short motif at 272–275 is the DEAD box element; the sequence is DEAD. 2 disordered regions span residues 377–403 and 871–977; these read NKSL…KKGK and KTGA…KRKF. Basic residues predominate over residues 394-403; the sequence is QNSRKSKKGK. The region spanning 403–554 is the Helicase C-terminal domain; the sequence is KFQKLKVSAS…SMYEASCKLM (152 aa). A compositionally biased stretch (polar residues) spans 878–894; it reads SIPTNLLSDPTTDSGSQ. The segment covering 910–921 has biased composition (basic and acidic residues); it reads RLPDKFRDDYQS. Positions 961 to 977 are enriched in basic residues; that stretch reads KEKKRQKNARPTKKRKF.

This sequence belongs to the DEAD box helicase family. DDX54/DBP10 subfamily.

It is found in the nucleus. The protein localises to the nucleolus. It carries out the reaction ATP + H2O = ADP + phosphate + H(+). ATP-binding RNA helicase involved in the biogenesis of 60S ribosomal subunits and is required for the normal formation of 25S and 5.8S rRNAs. The protein is ATP-dependent RNA helicase DBP10 (DBP10) of Vanderwaltozyma polyspora (strain ATCC 22028 / DSM 70294 / BCRC 21397 / CBS 2163 / NBRC 10782 / NRRL Y-8283 / UCD 57-17) (Kluyveromyces polysporus).